The chain runs to 253 residues: Glucosamine-6-phosphate deaminase (253 aa).

Residue Asp-65 is the Proton acceptor; for enolization step of the active site. The For ring-opening step role is filled by Asn-133. Catalysis depends on His-135, which acts as the Proton acceptor; for ring-opening step. The active-site For ring-opening step is Glu-140.

The protein belongs to the glucosamine/galactosamine-6-phosphate isomerase family. NagB subfamily.

It carries out the reaction alpha-D-glucosamine 6-phosphate + H2O = beta-D-fructose 6-phosphate + NH4(+). It functions in the pathway amino-sugar metabolism; N-acetylneuraminate degradation; D-fructose 6-phosphate from N-acetylneuraminate: step 5/5. Catalyzes the reversible isomerization-deamination of glucosamine 6-phosphate (GlcN6P) to form fructose 6-phosphate (Fru6P) and ammonium ion. The chain is Glucosamine-6-phosphate deaminase from Corynebacterium glutamicum (strain ATCC 13032 / DSM 20300 / JCM 1318 / BCRC 11384 / CCUG 27702 / LMG 3730 / NBRC 12168 / NCIMB 10025 / NRRL B-2784 / 534).